Here is a 212-residue protein sequence, read N- to C-terminus: ATP-dependent Clp protease proteolytic subunit (212 aa).

The active-site Nucleophile is the serine 112. Histidine 137 is an active-site residue.

The protein belongs to the peptidase S14 family. As to quaternary structure, fourteen ClpP subunits assemble into 2 heptameric rings which stack back to back to give a disk-like structure with a central cavity, resembling the structure of eukaryotic proteasomes.

It is found in the cytoplasm. It catalyses the reaction Hydrolysis of proteins to small peptides in the presence of ATP and magnesium. alpha-casein is the usual test substrate. In the absence of ATP, only oligopeptides shorter than five residues are hydrolyzed (such as succinyl-Leu-Tyr-|-NHMec, and Leu-Tyr-Leu-|-Tyr-Trp, in which cleavage of the -Tyr-|-Leu- and -Tyr-|-Trp bonds also occurs).. Cleaves peptides in various proteins in a process that requires ATP hydrolysis. Has a chymotrypsin-like activity. Plays a major role in the degradation of misfolded proteins. The protein is ATP-dependent Clp protease proteolytic subunit of Thiobacillus denitrificans (strain ATCC 25259 / T1).